Consider the following 433-residue polypeptide: Alpha-(1,3)-fucosyltransferase fut-1 (433 aa).

At 1-12 (MTARSIKLFFAR) the chain is on the cytoplasmic side. Residues 13-32 (WKYLMFACCITYLLVIYAPI) traverse the membrane as a helical; Signal-anchor for type II membrane protein segment. The Lumenal portion of the chain corresponds to 33-433 (SKSEQKDWKE…GTLVDSIPLD (401 aa)). Residues Asn-194 and Asn-359 are each glycosylated (N-linked (GlcNAc...) asparagine).

The protein belongs to the glycosyltransferase 10 family. Requires Mg(2+) as cofactor. The cofactor is Mn(2+). N-glycosylated. Glycosylation is important for enzymatic activity. As to expression, expressed in the pharyngeal-intestinal (PI) and anal valves. Expressed in ASG neurons and in one or two neurons in the retrovesicular ganglion and two neurons posterior to the PI valve and PHA and PHB neurons in the tail.

It localises to the golgi apparatus. The protein resides in the golgi stack membrane. It catalyses the reaction N(4)-{beta-D-GlcNAc-(1-&gt;2)-alpha-D-Man-(1-&gt;3)-[beta-D-GlcNAc-(1-&gt;2)-alpha-D-Man-(1-&gt;6)]-beta-D-Man-(1-&gt;4)-beta-D-GlcNAc-(1-&gt;4)-beta-D-GlcNAc}-L-asparaginyl-[protein] + GDP-beta-L-fucose = N(4)-{beta-D-GlcNAc-(1-&gt;2)-alpha-D-Man-(1-&gt;3)-[beta-D-GlcNAc-(1-&gt;2)-alpha-D-Man-(1-&gt;6)]-beta-D-Man-(1-&gt;4)-beta-D-GlcNAc-(1-&gt;4)-[alpha-L-Fuc(1-&gt;3)]-beta-D-GlcNAc}-L-asparaginyl-[protein] + GDP + H(+). It participates in protein modification; protein glycosylation. Its activity is regulated as follows. Inhibited by Cu(2+) or Zn(2+) and to a lesser extent Ni(2+) ions. Preferentially catalyzes the addition of fucose in alpha 1-3 linkage to the first GlcNAc residue (with or without alpha 1,6-linked fucose), next to the peptide chains in N-glycans. Unlike in mammals, does not require the prior action of N-acetylglucosaminyltransferase I to generate complex N-glycans. The sequence is that of Alpha-(1,3)-fucosyltransferase fut-1 from Caenorhabditis elegans.